Reading from the N-terminus, the 595-residue chain is MSMPLPMKLRTRLFLSISALITVSLFGLLLGLFSVMQLGRAQEQRMSHHYATIEVSQQLRQLLGDQLVILLRETPDGQALERSQNDFRRVLEQGRANTVDSAEQAALDGVRDAYLQLQAHTPALLEAPMVDNDGFSEAFNGLRLRLQDLQQLALAGISDAETSARHRAYLVAGLLGLVGVAILLIGFVTAHSIARRFGAPIETLARAADRIGEGDFDVTLPMTNVAEVGQLTRRFGLMAEALRQYRKTSVEEVLSGERRLQAVLDSIDDGLVIFDNQGRIEHANPVAIRQLFVSNDPHGKRIDEILSDVDVQEAVEKALLGEVQDEAMPDLVVDVAGESRLLAWSLYPVTHPGGHSVGAVLVVRDVTEQRAFERVRSEFVLRASHELRTPVTGMQMAFSLLRERLDFPAESREADLIQTVDEEMSRLVLLINDLLNFSRYQTGMQKLELASCDLVDLLTQAQQRFIPKGEARRVSLQLELGDELPRLQLDRLQIERVIDNLLENALRHSSEGGQIHLQARRQGDRVLIAVEDNGEGIPFSQQGRIFEPFVQVGRKKGGAGLGLELCKEIIQLHGGRIAVRSQPGQGARFYMLLPV.

Topologically, residues 1–12 (MSMPLPMKLRTR) are cytoplasmic. Residues 13–33 (LFLSISALITVSLFGLLLGLF) traverse the membrane as a helical segment. The Periplasmic segment spans residues 34-167 (SVMQLGRAQE…SDAETSARHR (134 aa)). The helical transmembrane segment at 168-188 (AYLVAGLLGLVGVAILLIGFV) threads the bilayer. The Cytoplasmic segment spans residues 189–595 (TAHSIARRFG…GARFYMLLPV (407 aa)). The HAMP domain occupies 195 to 247 (RRFGAPIETLARAADRIGEGDFDVTLPMTNVAEVGQLTRRFGLMAEALRQYRK). Residues 258–323 (RRLQAVLDSI…AVEKALLGEV (66 aa)) form the PAS domain. The PAC domain occupies 327–369 (AMPDLVVDVAGESRLLAWSLYPVTHPGGHSVGAVLVVRDVTEQ). The 214-residue stretch at 382 to 595 (RASHELRTPV…GARFYMLLPV (214 aa)) folds into the Histidine kinase domain. Phosphohistidine; by autocatalysis is present on His385.

Post-translationally, autophosphorylated.

The protein localises to the cell inner membrane. It catalyses the reaction ATP + protein L-histidine = ADP + protein N-phospho-L-histidine.. In terms of biological role, member of the two-component regulatory system AlgB/KinB involved in regulation of alginate biosynthesis genes. KinB functions as a membrane-associated protein kinase that phosphorylates AlgB, probably in response to environmental signals. The chain is Alginate biosynthesis sensor protein KinB (kinB) from Pseudomonas aeruginosa.